The primary structure comprises 282 residues: Small ribosomal subunit protein uS2 (282 aa).

The interval Lys260–Arg282 is disordered. A compositionally biased stretch (basic and acidic residues) spans Val266 to Arg282.

Belongs to the universal ribosomal protein uS2 family.

This is Small ribosomal subunit protein uS2 from Wolbachia sp. subsp. Drosophila simulans (strain wRi).